Reading from the N-terminus, the 636-residue chain is Threonine--tRNA ligase (636 aa).

A TGS domain is found at 1–59; that stretch reads MPIITLPDGTKKIFEQVVSVEQVAKSMGLVKAALAGEVDGELVSTSFLIKTDANLTIIT. The catalytic stretch occupies residues 240-531; sequence DHRKIGKTQD…LIEHYEGAYP (292 aa). Residues Cys331, His382, and His508 each contribute to the Zn(2+) site.

It belongs to the class-II aminoacyl-tRNA synthetase family. In terms of assembly, homodimer. It depends on Zn(2+) as a cofactor.

It localises to the cytoplasm. It carries out the reaction tRNA(Thr) + L-threonine + ATP = L-threonyl-tRNA(Thr) + AMP + diphosphate + H(+). Its function is as follows. Catalyzes the attachment of threonine to tRNA(Thr) in a two-step reaction: L-threonine is first activated by ATP to form Thr-AMP and then transferred to the acceptor end of tRNA(Thr). Also edits incorrectly charged L-seryl-tRNA(Thr). The chain is Threonine--tRNA ligase from Vesicomyosocius okutanii subsp. Calyptogena okutanii (strain HA).